A 300-amino-acid polypeptide reads, in one-letter code: Uricase (300 aa).

The residue at position 2 (A2) is an N-acetylalanine. K6 and K19 each carry N6-acetyllysine; alternate. N6-succinyllysine; alternate is present on residues K6 and K19. K19 acts as the Charge relay system in catalysis. 2 positions are modified to N6-acetyllysine: K23 and K32. Residues S35 and S59 each carry the phosphoserine modification. The Charge relay system role is filled by T64. Urate is bound by residues T64 and D65. Residues K114, K118, and K160 each carry the N6-acetyllysine modification. F166 is a urate binding site. N6-acetyllysine is present on residues K171 and K181. R183 provides a ligand contact to urate. 2 positions are modified to N6-acetyllysine; alternate: K217 and K224. N6-succinyllysine; alternate is present on residues K217 and K224. Position 228 is a phosphoserine (S228). Urate contacts are provided by V231, Q232, and N258. H260 acts as the Charge relay system in catalysis. Position 274 is an N6-acetyllysine (K274). Position 285 is a phosphotyrosine (Y285). The Microbody targeting signal motif lies at 298-300 (SRL).

It belongs to the uricase family.

The protein resides in the peroxisome. The enzyme catalyses urate + O2 + H2O = 5-hydroxyisourate + H2O2. It functions in the pathway purine metabolism; urate degradation; (S)-allantoin from urate: step 1/3. Functionally, catalyzes the oxidation of uric acid to 5-hydroxyisourate, which is further processed to form (S)-allantoin. The chain is Uricase (UOX) from Oryctolagus cuniculus (Rabbit).